The sequence spans 1203 residues: DNA-directed RNA polymerase subunit beta' (1203 aa).

Zn(2+) contacts are provided by cysteine 60, cysteine 62, cysteine 75, and cysteine 78. Mg(2+) contacts are provided by aspartate 449, aspartate 451, and aspartate 453. Zn(2+)-binding residues include cysteine 818, cysteine 892, cysteine 899, and cysteine 902.

The protein belongs to the RNA polymerase beta' chain family. As to quaternary structure, the RNAP catalytic core consists of 2 alpha, 1 beta, 1 beta' and 1 omega subunit. When a sigma factor is associated with the core the holoenzyme is formed, which can initiate transcription. Mg(2+) is required as a cofactor. Requires Zn(2+) as cofactor.

It carries out the reaction RNA(n) + a ribonucleoside 5'-triphosphate = RNA(n+1) + diphosphate. Functionally, DNA-dependent RNA polymerase catalyzes the transcription of DNA into RNA using the four ribonucleoside triphosphates as substrates. This is DNA-directed RNA polymerase subunit beta' from Bacillus cereus (strain ATCC 10987 / NRS 248).